Reading from the N-terminus, the 353-residue chain is Photosystem II D2 protein (353 aa).

Position 2 is an N-acetylthreonine (threonine 2). Threonine 2 is subject to Phosphothreonine. The chain crosses the membrane as a helical span at residues 41 to 61 (CAYFALGGWFTGTTFVTSWYT). Histidine 118 is a binding site for chlorophyll a. The chain crosses the membrane as a helical span at residues 125–141 (GFMLRQFELARSVQLRP). Residues glutamine 130 and asparagine 143 each contribute to the pheophytin a site. A helical transmembrane segment spans residues 153-166 (VFVSVFLIYPLGQS). Position 198 (histidine 198) interacts with chlorophyll a. The helical transmembrane segment at 208-228 (AALLCAIHGATVENTLFEDGD) threads the bilayer. 2 residues coordinate a plastoquinone: histidine 215 and phenylalanine 262. Residue histidine 215 participates in Fe cation binding. Position 269 (histidine 269) interacts with Fe cation. A helical transmembrane segment spans residues 279–295 (GLWMSALGVVGLALNLR).

The protein belongs to the reaction center PufL/M/PsbA/D family. In terms of assembly, PSII is composed of 1 copy each of membrane proteins PsbA, PsbB, PsbC, PsbD, PsbE, PsbF, PsbH, PsbI, PsbJ, PsbK, PsbL, PsbM, PsbT, PsbX, PsbY, PsbZ, Psb30/Ycf12, at least 3 peripheral proteins of the oxygen-evolving complex and a large number of cofactors. It forms dimeric complexes. The D1/D2 heterodimer binds P680, chlorophylls that are the primary electron donor of PSII, and subsequent electron acceptors. It shares a non-heme iron and each subunit binds pheophytin, quinone, additional chlorophylls, carotenoids and lipids. There is also a Cl(-1) ion associated with D1 and D2, which is required for oxygen evolution. The PSII complex binds additional chlorophylls, carotenoids and specific lipids. is required as a cofactor.

It localises to the plastid. The protein resides in the chloroplast thylakoid membrane. It catalyses the reaction 2 a plastoquinone + 4 hnu + 2 H2O = 2 a plastoquinol + O2. In terms of biological role, photosystem II (PSII) is a light-driven water:plastoquinone oxidoreductase that uses light energy to abstract electrons from H(2)O, generating O(2) and a proton gradient subsequently used for ATP formation. It consists of a core antenna complex that captures photons, and an electron transfer chain that converts photonic excitation into a charge separation. The D1/D2 (PsbA/PsbD) reaction center heterodimer binds P680, the primary electron donor of PSII as well as several subsequent electron acceptors. D2 is needed for assembly of a stable PSII complex. This chain is Photosystem II D2 protein, found in Glycine max (Soybean).